Here is a 282-residue protein sequence, read N- to C-terminus: U1 small nuclear ribonucleoprotein A (282 aa).

Alanine 2 is subject to N-acetylalanine. The RRM 1 domain maps to 10 to 89 (HTIYINNLNE…KPMRIQYAKT (80 aa)). Lysine 60 carries the N6-acetyllysine modification. Residues 100–132 (TFVERDRKREKRKPKSQETPATKKAVQGGGATP) form a disordered region. Threonine 131 carries the post-translational modification Phosphothreonine. At arginine 152 the chain carries Omega-N-methylarginine. An RRM 2 domain is found at 208–282 (HILFLTNLPE…NAMKISFAKK (75 aa)).

Belongs to the RRM U1 A/B'' family. As to quaternary structure, U1 snRNP is composed of the 7 core Sm proteins SNRPB, SNRPD1, SNRPD2, SNRPD3, SNRPE, SNRPF and SNRPG that assemble in a heptameric protein ring on the Sm site of the small nuclear RNA to form the core snRNP, and at least three U1 snRNP-specific proteins SNRNP70/U1-70K, SNRPA/U1-A and SNRPC/U1-C. Interacts with SFPQ; component of a snRNP-free complex with SFPQ. Interacts with IVNS1ABP (via BACK domain); the interaction is indirect.

Its subcellular location is the nucleus. Its function is as follows. Component of the spliceosomal U1 snRNP, which is essential for recognition of the pre-mRNA 5' splice-site and the subsequent assembly of the spliceosome. U1 snRNP is the first snRNP to interact with pre-mRNA. This interaction is required for the subsequent binding of U2 snRNP and the U4/U6/U5 tri-snRNP. SNRPA binds stem loop II of U1 snRNA. In a snRNP-free form (SF-A) may be involved in coupled pre-mRNA splicing and polyadenylation process. May bind preferentially to the 5'-UGCAC-3' motif on RNAs. The chain is U1 small nuclear ribonucleoprotein A (SNRPA) from Homo sapiens (Human).